The sequence spans 289 residues: uncharacterized protein (289 aa).

9 helical membrane-spanning segments follow: residues 13–32 (INFA…LSGS), 37–59 (LIIS…HLND), 80–99 (IVTE…IFFI), 104–121 (EIAL…WLYS), 141–160 (VFTY…TIFS), 165–183 (VGVV…GFFL), 203–225 (VLSP…FVVI), 235–252 (TSSL…FAIY), and 265–287 (IISS…AIGC).

Its subcellular location is the cell membrane. This is an uncharacterized protein from Archaeoglobus fulgidus (strain ATCC 49558 / DSM 4304 / JCM 9628 / NBRC 100126 / VC-16).